Here is an 892-residue protein sequence, read N- to C-terminus: MLETILALLREILHREPSKEERQLFFTLLSSNFPVPPLDDWNTVAGIRLAVLGNPVESRRVDSCLKELSENKALKNVRSTLYVLRLLANQSKAFVLATPHNLLVQDNTQTTMQSAPLTTTKTNKLHGKSKHKSKKSIRSILFKDFDSTSEESDTETSAVEACMARIDQKETSTRLIPNESSGKLSKDTILEHAIVRDLIYAMQGLPGQYFELIKDPTSGISHFVLQRQYQSLSVSQTAATFCERIASCGFFYTRCTELLNAVTKTNMGKTRASLCEALHTGLSEYRQRISLLDSQLTEEQMTLVELTAVANLIREEISTLAVIADNCLYDKSLTSPQILNIIFGYSLHGDRKMHHIGQSLLIKASEPFFDYLKHWIIEGSLLSTEYFIQPTTSNSTDILILQTNNLLVSRSIFINSNWYNKFHISSSPDLKTHPLLSPYVTKLCFEIGRASAFLREDCNNITWRFPESIVALIREANFAKLLSSYSSDASEGTVKLIRSIHMLSSKAVVAIIKRQFLLFDHLNGILYILLGMQGDFIPSLCSILSSTSGGDKYKLSMLEKIEQAMMSCNVSNLPSHVLGCVDVRIDNSKSNFYVTYSIKDPLTSIITPGQIRIYETIFQIQWRLRSADDKLDQIILLTNFFYRRNTQQILTNAGRVGIFRLHYRTLTEEVPLAYTLYVARLSCIRNRTKQLVLALLNYISHDCIAPEYMTLFANLEAAETIKDIIYYHDIAVRTICYKMLISINYHKMADAPLPAPKESSGHHPRQLRSCDIYNGQVMFTDKTISIFSDFHTSLVKICAQIALLHGSVAELFNFQSIFTQDFTMKLQEAANFLDAYVRSFNTELNTMITCLQRCRSIPIPVLDEFDYSHYENLEASLLAVGMHSETHSSHKR.

It belongs to the TUBGCP family. In terms of assembly, component of the gamma-tubulin small complex (gamma-TuSC) composed of tubulin gamma chain, gamma-tubulin complex protein 2 (GCP2) and gamma-tubulin complex protein 3 (GCP3). Interacts with tubulin gamma chain.

Its subcellular location is the cytoplasm. It is found in the cytoskeleton. The protein localises to the flagellum axoneme. The protein resides in the flagellum basal body. Functionally, component of the gamma-tubulin small complex (gamma-TuSC) involved in microtubule (MT) nucleation for the formation of median bodies and in the biogenesis of flagella. Gamma-TuSC may be required for the correct positioning of EB1 within the trophozoites. The polypeptide is Gamma-tubulin small complex component GCP3 (Giardia intestinalis (strain ATCC 50803 / WB clone C6) (Giardia lamblia)).